A 675-amino-acid chain; its full sequence is Acyl-coenzyme A oxidase 3, peroxisomal (675 aa).

Residues methionine 1 to cysteine 34 constitute a peroxisome transit peptide. Alanine 442–leucine 457 contributes to the FAD binding site.

The protein belongs to the acyl-CoA oxidase family. Requires FAD as cofactor. As to expression, most abundant in flowers and senescing rosette leaves. Lower expression in hypocotyls, stems, young rosette leaves, cotyledons, cauline leaves and root tip of young seedlings.

It localises to the peroxisome. It catalyses the reaction a 2,3-saturated acyl-CoA + O2 = a (2E)-enoyl-CoA + H2O2. The protein operates within lipid metabolism; peroxisomal fatty acid beta-oxidation. Catalyzes the desaturation of medium-chain acyl-CoAs to 2-trans-enoyl-CoAs. Active on C8:0- to C14:0-CoA with a maximal activity on C12:0-CoA. The chain is Acyl-coenzyme A oxidase 3, peroxisomal (ACX3) from Arabidopsis thaliana (Mouse-ear cress).